The following is a 189-amino-acid chain: Thymidine kinase (189 aa).

ATP contacts are provided by residues 9-16 and 85-88; these read GTMNSGKT and DESQ. The active-site Proton acceptor is glutamate 86. Residues cysteine 143, cysteine 146, cysteine 180, and histidine 183 each coordinate Zn(2+).

It belongs to the thymidine kinase family. Homotetramer.

The protein localises to the cytoplasm. It catalyses the reaction thymidine + ATP = dTMP + ADP + H(+). The chain is Thymidine kinase from Streptococcus pyogenes serotype M3 (strain ATCC BAA-595 / MGAS315).